Reading from the N-terminus, the 464-residue chain is Divalent metal cation transporter MntH (464 aa).

Helical transmembrane passes span 57–77 (ILIA…AGGA), 82–102 (SLLS…SMAA), 125–145 (GIIL…AEII), 157–177 (IPLV…LLLM), 186–206 (AIVA…VFLA), 229–249 (MLYL…LYLG), 281–301 (LTIA…LFFG), 321–341 (IVGA…LLSS), 376–396 (LLSV…EAKI), 399–419 (LLTL…VPLV), and 443–463 (VATV…VGVI).

It belongs to the NRAMP family.

The protein resides in the cell membrane. Functionally, h(+)-stimulated, divalent metal cation uptake system. This chain is Divalent metal cation transporter MntH, found in Levilactobacillus brevis (Lactobacillus brevis).